The following is a 1199-amino-acid chain: Metabotropic glutamate receptor 1 (1199 aa).

Residues 1 to 20 form the signal peptide; that stretch reads MVRLLLIFFPMIFLEMSILP. The Extracellular portion of the chain corresponds to 21–592; that stretch reads RMPDRKVLLA…IRYLEWSDIE (572 aa). A disulfide bridge links Cys67 with Cys109. L-glutamate is bound at residue Tyr74. Asn98 carries an N-linked (GlcNAc...) asparagine glycan. L-glutamate contacts are provided by residues Ser165 and 186–188; that span reads SAT. Asn223 carries N-linked (GlcNAc...) asparagine glycosylation. Tyr236 lines the L-glutamate pocket. A disulfide bridge connects residues Cys289 and Cys291. Residue Asp318 participates in L-glutamate binding. The cysteines at positions 378 and 394 are disulfide-linked. N-linked (GlcNAc...) asparagine glycosylation is present at Asn397. Residue Lys409 coordinates L-glutamate. Cys432 and Cys439 form a disulfide bridge. Asn515 is a glycosylation site (N-linked (GlcNAc...) asparagine). A helical membrane pass occupies residues 593-615; sequence SIIAIAFSCLGILVTLFVTLIFV. Residues 616–629 are Cytoplasmic-facing; sequence LYRDTPVVKSSSRE. Residues 630–650 traverse the membrane as a helical segment; sequence LCYIILAGIFLGYVCPFTLIA. At 651 to 658 the chain is on the extracellular side; it reads KPTTTSCY. An intrachain disulfide couples Cys657 to Cys746. Residues 659–680 traverse the membrane as a helical segment; that stretch reads LQRLLVGLSSAMCYSALVTKTN. Topologically, residues 681 to 703 are cytoplasmic; that stretch reads RIARILAGSKKKICTRKPRFMSA. A helical transmembrane segment spans residues 704–727; the sequence is WAQVIIASILISVQLTLVVTLIIM. Topologically, residues 728–750 are extracellular; sequence EPPMPILSYPSIKEVYLICNTSN. A glycan (N-linked (GlcNAc...) asparagine) is linked at Asn747. The helical transmembrane segment at 751 to 772 threads the bilayer; sequence LGVVAPVGYNGLLIMSCTYYAF. Over 773–785 the chain is Cytoplasmic; that stretch reads KTRNVPANFNEAK. A helical membrane pass occupies residues 786-807; that stretch reads YIAFTMYTTCIIWLAFVPIYFG. The Extracellular portion of the chain corresponds to 808–815; it reads SNYKIITT. A helical transmembrane segment spans residues 816-840; the sequence is CFAVSLSVTVALGCMFTPKMYIIIA. At 841–1199 the chain is on the cytoplasmic side; sequence KPERNVRSAF…RDYKQSSSTL (359 aa). Ser853 carries the phosphoserine modification. The residue at position 871 (Thr871) is a Phosphothreonine. 3 disordered regions span residues 882 to 906, 959 to 1035, and 1055 to 1082; these read GAGNANSNGKSVSWSEPGGRQAPKG, EEDN…QPKS, and HAVLAGPGTPGNGLRSLYPPPPPPQHLQ. Residues 885 to 895 are compositionally biased toward polar residues; sequence NANSNGKSVSW. A phosphoserine mark is found at Ser894 and Ser969. Pro residues predominate over residues 1012–1032; that stretch reads GLPPPLPQQQQQPPPQPPPQQ. Position 1097 is a phosphoserine (Ser1097). A disordered region spans residues 1118–1177; that stretch reads VYEREGNTEEDDLEEEEDLPAASKLTPEDSPALTPPSPFRDSVASGSSVPSSPVSESVLC. Residues 1125-1136 show a composition bias toward acidic residues; it reads TEEDDLEEEEDL. Ser1147 carries the post-translational modification Phosphoserine. Thr1151 bears the Phosphothreonine mark. Residue Ser1154 is modified to Phosphoserine. A compositionally biased stretch (low complexity) spans 1159–1175; the sequence is SVASGSSVPSSPVSESV.

It belongs to the G-protein coupled receptor 3 family. As to quaternary structure, homodimer; disulfide-linked. The PPXXF motif binds HOMER1, HOMER2 and HOMER3. Interacts with TAMALIN. Interacts with RYR1, RYR2, ITPR1, SHANK1 and SHANK3. Interacts with SHIA1. Expressed in the striatum (at protein level). Expressed in type II unipolar brush cells of the cerebellum (at protein level).

The protein localises to the cell membrane. Its subcellular location is the postsynaptic cell membrane. The protein resides in the cell projection. It localises to the dendrite. In terms of biological role, G-protein coupled receptor for glutamate. Ligand binding causes a conformation change that triggers signaling via guanine nucleotide-binding proteins (G proteins) and modulates the activity of down-stream effectors. Signaling activates a phosphatidylinositol-calcium second messenger system. May participate in the central action of glutamate in the CNS, such as long-term potentiation in the hippocampus and long-term depression in the cerebellum (By. similarity). May function in the light response in the retina. Induces GRID1 and GRID2 cation-channel activation via GNAQ-PLC-PKC pathway in dopaminergic neurons and cerebellar Purkinje cell, respectively. The chain is Metabotropic glutamate receptor 1 (Grm1) from Mus musculus (Mouse).